The following is a 241-amino-acid chain: Zinc finger CCHC domain-containing protein 24 (241 aa).

Residues Ser-65 and Ser-93 each carry the phosphoserine modification. The segment at 132-149 (YLCHLCFNKGHYIKDCPQ) adopts a CCHC-type zinc-finger fold.

The sequence is that of Zinc finger CCHC domain-containing protein 24 (ZCCHC24) from Homo sapiens (Human).